Here is a 337-residue protein sequence, read N- to C-terminus: Probable cytosolic iron-sulfur protein assembly protein CIAO1 homolog (337 aa).

WD repeat units lie at residues 15-54, 65-104, 109-148, 154-193, 199-238, 253-292, and 301-337; these read DDTS…DSKM, SHTR…FAEV, GHES…DFSV, PHTQ…WVTQ, CHVG…SKSA, NTRW…ESPV, and RHEL…ELEI.

Belongs to the WD repeat CIA1 family.

Essential component of the cytosolic iron-sulfur (Fe/S) protein assembly machinery. Required for the maturation of extramitochondrial Fe/S proteins. In Caenorhabditis elegans, this protein is Probable cytosolic iron-sulfur protein assembly protein CIAO1 homolog.